The chain runs to 351 residues: Phospho-N-acetylmuramoyl-pentapeptide-transferase (351 aa).

10 helical membrane passes run 17–37 (TAYA…FIIS), 61–83 (MGIP…FFWI), 88–105 (IYFL…CLGF), 130–150 (ILFS…HVSI), 158–178 (SLKL…LISA), 190–210 (GLAI…AYLT), 230–250 (LVIF…FNAY), 254–274 (IMMG…VALI), 279–299 (ILFA…IIQV), and 328–348 (QVVI…LSTI).

Belongs to the glycosyltransferase 4 family. MraY subfamily. Mg(2+) serves as cofactor.

It is found in the cell inner membrane. It catalyses the reaction UDP-N-acetyl-alpha-D-muramoyl-L-alanyl-gamma-D-glutamyl-meso-2,6-diaminopimeloyl-D-alanyl-D-alanine + di-trans,octa-cis-undecaprenyl phosphate = di-trans,octa-cis-undecaprenyl diphospho-N-acetyl-alpha-D-muramoyl-L-alanyl-D-glutamyl-meso-2,6-diaminopimeloyl-D-alanyl-D-alanine + UMP. Its pathway is cell wall biogenesis; peptidoglycan biosynthesis. In terms of biological role, catalyzes the initial step of the lipid cycle reactions in the biosynthesis of the cell wall peptidoglycan: transfers peptidoglycan precursor phospho-MurNAc-pentapeptide from UDP-MurNAc-pentapeptide onto the lipid carrier undecaprenyl phosphate, yielding undecaprenyl-pyrophosphoryl-MurNAc-pentapeptide, known as lipid I. The chain is Phospho-N-acetylmuramoyl-pentapeptide-transferase from Borrelia duttonii (strain Ly).